A 1192-amino-acid chain; its full sequence is Probable inactive serine/threonine-protein kinase DDB_G0280131 (1192 aa).

Disordered stretches follow at residues 23–90, 144–189, 201–236, 301–406, and 478–499; these read STIN…NLNE, DSSI…SQQD, VSISLPPPPTTEELPLPPPSTEELQLPPPPPTTTTA, SIPT…FKDS, and DLDDDITNKNNDNNSNGNNNNK. Residues 26 to 43 show a composition bias toward low complexity; the sequence is NLNNNNSNNNNNNNNNGN. Residues 44–60 show a composition bias toward polar residues; that stretch reads SATKISFQEQMPNGNGN. Low complexity-rich tracts occupy residues 61 to 73 and 154 to 175; these read SSTTTTTAAQQSA and SSYLSKNLSPPSNPSNIISNNN. Residues 201–232 are compositionally biased toward pro residues; it reads VSISLPPPPTTEELPLPPPSTEELQLPPPPPT. A compositionally biased stretch (low complexity) spans 301–324; sequence SIPTPIVTPSTTTSTNTTTAATVN. Residues 325-338 are compositionally biased toward polar residues; it reads KLNASKSPNGTLTT. The span at 362 to 376 shows a compositional bias: low complexity; it reads PTLSSPSPSQSAAPQ. Residues 377–391 show a composition bias toward pro residues; the sequence is PAAPQPTPTSQPQPP. Low complexity-rich tracts occupy residues 392 to 402 and 485 to 498; these read TTTVSTPVSPT and NKNNDNNSNGNNNN. The Protein kinase domain maps to 521–783; it reads AQPSDIIGSG…ILKILRQPLH (263 aa). ATP contacts are provided by residues 527–535 and K549; that span reads IGSGNNGTT. The disordered stretch occupies residues 790 to 831; sequence KPTQQQQQQQQQDQQQQQPEQQLTSSTSSTSTQDSLVSQEQV. Positions 791 to 828 are enriched in low complexity; sequence PTQQQQQQQQQDQQQQQPEQQLTSSTSSTSTQDSLVSQ.

This sequence belongs to the protein kinase superfamily. TKL Ser/Thr protein kinase family.

The polypeptide is Probable inactive serine/threonine-protein kinase DDB_G0280131 (Dictyostelium discoideum (Social amoeba)).